The chain runs to 437 residues: Lipopolysaccharide biosynthesis protein RfbH (437 aa).

This sequence belongs to the DegT/DnrJ/EryC1 family. It depends on pyridoxal 5'-phosphate as a cofactor.

It participates in bacterial outer membrane biogenesis; LPS O-antigen biosynthesis. This is Lipopolysaccharide biosynthesis protein RfbH (rfbH) from Salmonella typhimurium (strain LT2 / SGSC1412 / ATCC 700720).